The primary structure comprises 324 residues: PGR5-like protein 1A, chloroplastic (324 aa).

A chloroplast-targeting transit peptide spans 1–60; that stretch reads MGSKMLFSLTSPRLFSAVSRKPSSSFSPSPPSPSSRTQWTQLSPGKSISLRRRVFLLPAK. Residues 16 to 42 are disordered; sequence SAVSRKPSSSFSPSPPSPSSRTQWTQL. The Stromal segment spans residues 61–198; it reads ATTEQSGPVG…KVYSDLAVDY (138 aa). Cys82 and Cys183 are disulfide-bonded. Residues 199–219 form a helical membrane-spanning segment; that stretch reads FKMLLLNVPATVVALGLFFFL. Residues 220–236 lie on the Lumenal, thylakoid side of the membrane; that stretch reads DDITGFEITYIMELPEP. The chain crosses the membrane as a helical span at residues 237 to 257; it reads YSFIFTWFAAVPVIVYLALSI. The Stromal portion of the chain corresponds to 258–324; that stretch reads TKLIIKDFLI…LITLPEGSQA (67 aa).

This sequence belongs to the PGR5 family. Homodimer and heterodimer with PGR5. Interacts with PGR5, FD2, petC, psaD1, LFNR1 and LFNR2. Also interacts with a Fe-containing cofactor (FCC). Disulfide bonds; Cys-300 and Cys-303 are probably involved in the formation of disulfide bridges with 'Cys-11' and 'Cys-105' of PGR5 while Cys-272 and Cys-275 are probably involved in the binding of a Fe-containing cofactor (FCC).

It localises to the plastid. It is found in the chloroplast thylakoid membrane. With respect to regulation, inhibited by antimycin A. In terms of biological role, ferredoxin-plastoquinone reductase involved in cyclic electron flow (CEF) around photosystem I. The homodimer is probably not involved in CEF. The polypeptide is PGR5-like protein 1A, chloroplastic (PGRL1A) (Arabidopsis thaliana (Mouse-ear cress)).